The chain runs to 153 residues: UPF0260 protein YcgN (153 aa).

Belongs to the UPF0260 family.

In Shigella boydii serotype 18 (strain CDC 3083-94 / BS512), this protein is UPF0260 protein YcgN.